The chain runs to 186 residues: DNA damage up-regulated protein (186 aa).

The tract at residues 147-166 (ATENGEGCRPARDPASSPSS) is disordered.

As to quaternary structure, interacts with DNA damage response proteins ATR, H2AX, PCNA, RAD18 and RAD51C. Forms a complex with H2AX and RAD18 following DDUP phosphorylation. Phosphorylated in an ATR-dependent manner; phosphorylation is required for interaction with H2AX and RAD18 and for DDUP-mediated DNA damage repair.

It localises to the nucleus. Its subcellular location is the chromosome. Its function is as follows. Promotes DNA damage repair through both homologous recombination repair (HRR) and post-replication repair (PRR) mechanisms. Enhances the retention of DNA damage response protein RAD18 at sites of DNA damage. This allows for HRR via association of RAD18 with RAD51C and for PRR via RAD18-mediated promotion of PCNA monoubiquitination. The sequence is that of DNA damage up-regulated protein from Homo sapiens (Human).